Consider the following 378-residue polypeptide: Succinate--CoA ligase [ADP-forming] subunit beta (378 aa).

Residues 9–237 (RDIVARYGIP…IAGEPESEIK (229 aa)) form the ATP-grasp domain. Residues Lys-45, 52–54 (GRG), Ile-94, and Glu-99 contribute to the ATP site. Mg(2+)-binding residues include Asn-192 and Asp-206. Residues Asn-257 and 314-316 (GIT) contribute to the substrate site.

The protein belongs to the succinate/malate CoA ligase beta subunit family. Heterotetramer of two alpha and two beta subunits. The cofactor is Mg(2+).

The enzyme catalyses succinate + ATP + CoA = succinyl-CoA + ADP + phosphate. It catalyses the reaction GTP + succinate + CoA = succinyl-CoA + GDP + phosphate. The protein operates within carbohydrate metabolism; tricarboxylic acid cycle; succinate from succinyl-CoA (ligase route): step 1/1. Functionally, succinyl-CoA synthetase functions in the citric acid cycle (TCA), coupling the hydrolysis of succinyl-CoA to the synthesis of either ATP or GTP and thus represents the only step of substrate-level phosphorylation in the TCA. The beta subunit provides nucleotide specificity of the enzyme and binds the substrate succinate, while the binding sites for coenzyme A and phosphate are found in the alpha subunit. This Herpetosiphon aurantiacus (strain ATCC 23779 / DSM 785 / 114-95) protein is Succinate--CoA ligase [ADP-forming] subunit beta.